Here is a 295-residue protein sequence, read N- to C-terminus: Ethanolamine ammonia-lyase small subunit (295 aa).

Positions 207, 228, and 258 each coordinate adenosylcob(III)alamin.

This sequence belongs to the EutC family. The basic unit is a heterodimer which dimerizes to form tetramers. The heterotetramers trimerize; 6 large subunits form a core ring with 6 small subunits projecting outwards. Adenosylcob(III)alamin is required as a cofactor.

The protein resides in the bacterial microcompartment. The enzyme catalyses ethanolamine = acetaldehyde + NH4(+). The protein operates within amine and polyamine degradation; ethanolamine degradation. Functionally, catalyzes the deamination of various vicinal amino-alcohols to oxo compounds. Allows this organism to utilize ethanolamine as the sole source of nitrogen and carbon in the presence of external vitamin B12. This is Ethanolamine ammonia-lyase small subunit from Escherichia coli (strain 55989 / EAEC).